A 125-amino-acid polypeptide reads, in one-letter code: MADLKALAESIVGLTLLEAQELKTILKDEYGIEPAAGGAVMVAAGGDAAGGAAEEEKTEFDVVLKNAGASKINVIKEVRGITGLGLKEAKELVEAGGKIKEGVDKAEAEDIKGKLEAAGAEVELA.

Belongs to the bacterial ribosomal protein bL12 family. Homodimer. Part of the ribosomal stalk of the 50S ribosomal subunit. Forms a multimeric L10(L12)X complex, where L10 forms an elongated spine to which 2 to 4 L12 dimers bind in a sequential fashion. Binds GTP-bound translation factors.

Forms part of the ribosomal stalk which helps the ribosome interact with GTP-bound translation factors. Is thus essential for accurate translation. The protein is Large ribosomal subunit protein bL12 of Ruegeria sp. (strain TM1040) (Silicibacter sp.).